The chain runs to 209 residues: Translation initiation factor IF-3 (209 aa).

Belongs to the IF-3 family. Monomer.

Its subcellular location is the cytoplasm. In terms of biological role, IF-3 binds to the 30S ribosomal subunit and shifts the equilibrium between 70S ribosomes and their 50S and 30S subunits in favor of the free subunits, thus enhancing the availability of 30S subunits on which protein synthesis initiation begins. The polypeptide is Translation initiation factor IF-3 (Chlorobium phaeovibrioides (strain DSM 265 / 1930) (Prosthecochloris vibrioformis (strain DSM 265))).